The sequence spans 37 residues: Large ribosomal subunit protein bL36c (37 aa).

The protein belongs to the bacterial ribosomal protein bL36 family.

Its subcellular location is the plastid. It is found in the chloroplast. The chain is Large ribosomal subunit protein bL36c from Phaeodactylum tricornutum (strain CCAP 1055/1).